We begin with the raw amino-acid sequence, 352 residues long: MSGNTLGTLFCVTNFGESHGPAIGCVVDGCPPGLALDAADIQAELDRRRPGTSRHVTQRQEADQVEILSGVYQGVTTGTPIALLIRNTDARSKDYSNIADTFRPGHADFTYTRKYGLRDPRGGGRSSARLTAPTVAAGAIAKKWLAEHHGVRVRGYMSQLGPIAIPFVSWDDVPANPFYAPNAAIVPELEAYMDQLRRDGDSVGARIEVVAENLPAGWGEPLYDRLDADIAHVMMGLNAVKGVSIGAGFGCIAQRGSEHGDEITPDGFVGNNAGGVLGGISTGQPVTVSLAIKPTSSIRVERRSVNSAGEPVMVQTLGRHDPCVGIRATPIAEAMLALVLIDHALRHRAQCG.

2 residues coordinate NADP(+): arginine 48 and arginine 54. Residues 125–127, 238–239, glycine 278, 293–297, and arginine 319 each bind FMN; these read RSS, NA, and KPTSS.

The protein belongs to the chorismate synthase family. As to quaternary structure, homotetramer. FMNH2 is required as a cofactor.

The catalysed reaction is 5-O-(1-carboxyvinyl)-3-phosphoshikimate = chorismate + phosphate. The protein operates within metabolic intermediate biosynthesis; chorismate biosynthesis; chorismate from D-erythrose 4-phosphate and phosphoenolpyruvate: step 7/7. Catalyzes the anti-1,4-elimination of the C-3 phosphate and the C-6 proR hydrogen from 5-enolpyruvylshikimate-3-phosphate (EPSP) to yield chorismate, which is the branch point compound that serves as the starting substrate for the three terminal pathways of aromatic amino acid biosynthesis. This reaction introduces a second double bond into the aromatic ring system. The chain is Chorismate synthase from Bordetella petrii (strain ATCC BAA-461 / DSM 12804 / CCUG 43448).